The following is a 56-amino-acid chain: PI-stichotoxin-Hcr2a (56 aa).

The region spanning 4 to 54 (CLEPKVVGPCTAYFPRFYFDSETGKCTPFIYGGCEGNSYVDEKLHACRAIC) is the BPTI/Kunitz inhibitor domain. Cystine bridges form between cysteine 4/cysteine 54, cysteine 13/cysteine 37, and cysteine 29/cysteine 50.

This sequence belongs to the venom Kunitz-type family. Sea anemone type 2 potassium channel toxin subfamily.

It localises to the secreted. The protein localises to the nematocyst. Its function is as follows. Serine protease inhibitor that acts on trypsin. The chain is PI-stichotoxin-Hcr2a from Radianthus crispa (Leathery sea anemone).